A 257-amino-acid chain; its full sequence is ATP synthase subunit a (257 aa).

A propeptide spans 1 to 8 (MRHLDFVL) (removed in mature form). Transmembrane regions (helical) follow at residues 34-54 (LTNIGLYLTISIFLILTYSLL), 93-113 (FFPLMYVLFIFILVNNLIGLV), 122-142 (HFILTFSISFTVVLGATILGF), 149-169 (FFSLFVPSGCPLALLPLLVLI), 187-207 (ANILSGHMLLSILSGFTYNIM), 210-230 (GIIFFILGLIPLAFIIAFSGL), and 231-251 (ELAIAFIQAQVFVVLACSYIK).

Belongs to the ATPase A chain family. As to quaternary structure, F-type ATPases have 2 components, CF(1) - the catalytic core - and CF(0) - the membrane proton channel. CF(1) has five subunits: alpha(3), beta(3), gamma(1), delta(1), epsilon(1). CF(0) has three main subunits: a, b and c.

The protein localises to the mitochondrion inner membrane. Its function is as follows. Mitochondrial membrane ATP synthase (F(1)F(0) ATP synthase or Complex V) produces ATP from ADP in the presence of a proton gradient across the membrane which is generated by electron transport complexes of the respiratory chain. F-type ATPases consist of two structural domains, F(1) - containing the extramembraneous catalytic core and F(0) - containing the membrane proton channel, linked together by a central stalk and a peripheral stalk. During catalysis, ATP synthesis in the catalytic domain of F(1) is coupled via a rotary mechanism of the central stalk subunits to proton translocation. Key component of the proton channel; it may play a direct role in the translocation of protons across the membrane. The polypeptide is ATP synthase subunit a (atp6) (Penicillium chrysogenum (Penicillium notatum)).